A 295-amino-acid polypeptide reads, in one-letter code: Phosphoenolpyruvate phosphomutase (295 aa).

The Nucleophile role is filled by aspartate 58. Mg(2+) is bound at residue aspartate 58.

The protein belongs to the isocitrate lyase/PEP mutase superfamily. PEP mutase family. As to quaternary structure, homotetramer. Mg(2+) is required as a cofactor.

The enzyme catalyses phosphoenolpyruvate + H(+) = 3-phosphonopyruvate. The protein operates within phosphorus metabolism; phosphonate biosynthesis. In terms of biological role, formation of a carbon-phosphorus bond by converting phosphoenolpyruvate (PEP) to phosphonopyruvate (P-Pyr). In Mytilus edulis (Blue mussel), this protein is Phosphoenolpyruvate phosphomutase.